A 365-amino-acid chain; its full sequence is Aminomethyltransferase (365 aa).

Belongs to the GcvT family. The glycine cleavage system is composed of four proteins: P, T, L and H.

The catalysed reaction is N(6)-[(R)-S(8)-aminomethyldihydrolipoyl]-L-lysyl-[protein] + (6S)-5,6,7,8-tetrahydrofolate = N(6)-[(R)-dihydrolipoyl]-L-lysyl-[protein] + (6R)-5,10-methylene-5,6,7,8-tetrahydrofolate + NH4(+). In terms of biological role, the glycine cleavage system catalyzes the degradation of glycine. In Natranaerobius thermophilus (strain ATCC BAA-1301 / DSM 18059 / JW/NM-WN-LF), this protein is Aminomethyltransferase.